Reading from the N-terminus, the 234-residue chain is MDTLSKKPEQRPEEITAILSSLDRYNPEKISILQEYATTQCADQHSDIEANLALLKLLQFQQQPNPNKEDIICNILSMALANFLTSDFTTALHVLPSYVLDSPAADTLAESIQKLFHLYTLLDGCRFPEFWAVYERDDAHADITADVADFENLVRISITRAVDISSQAIHKDVFRSWLNLSDNKFADYVKELGWKVEGETVVVPPNKENEAKPATTTESIKIEQISRLLKRTNE.

Residues 46 to 219 enclose the PCI domain; that stretch reads SDIEANLALL…EAKPATTTES (174 aa).

It belongs to the eIF-3 subunit K family. Component of the eukaryotic translation initiation factor 3 (eIF-3) complex.

It is found in the cytoplasm. Its function is as follows. Component of the eukaryotic translation initiation factor 3 (eIF-3) complex, which is involved in protein synthesis of a specialized repertoire of mRNAs and, together with other initiation factors, stimulates binding of mRNA and methionyl-tRNAi to the 40S ribosome. The eIF-3 complex specifically targets and initiates translation of a subset of mRNAs involved in cell proliferation. This chain is Eukaryotic translation initiation factor 3 subunit K, found in Yarrowia lipolytica (strain CLIB 122 / E 150) (Yeast).